A 97-amino-acid chain; its full sequence is Large ribosomal subunit protein eL37 (97 aa).

An N6-acetyllysine modification is found at Lys-10. Zn(2+) is bound by residues Cys-19, Cys-22, Cys-34, and Cys-37. Residues 19 to 37 (CRRCGSKAYHLQKSTCGKC) form a C4-type zinc finger. Residues Ser-96 and Ser-97 each carry the phosphoserine modification.

Belongs to the eukaryotic ribosomal protein eL37 family. In terms of assembly, component of the large ribosomal subunit.

The protein localises to the cytoplasm. Functionally, component of the large ribosomal subunit. The ribosome is a large ribonucleoprotein complex responsible for the synthesis of proteins in the cell. The sequence is that of Large ribosomal subunit protein eL37 (RPL37) from Bos taurus (Bovine).